A 701-amino-acid chain; its full sequence is Polyribonucleotide nucleotidyltransferase (701 aa).

Aspartate 487 and aspartate 493 together coordinate Mg(2+). In terms of domain architecture, KH spans 554-613; that stretch reads PTMIAMKIDTDKIRDVIGKGGATIRAICEETKASIDIEDDGSIKIFGETKEAADAAKQRI. The S1 motif domain occupies 623–691; it reads GKIYVGKVER…NRGRIKLSIK (69 aa).

Belongs to the polyribonucleotide nucleotidyltransferase family. As to quaternary structure, component of the RNA degradosome, which is a multiprotein complex involved in RNA processing and mRNA degradation. Mg(2+) serves as cofactor.

The protein localises to the cytoplasm. It carries out the reaction RNA(n+1) + phosphate = RNA(n) + a ribonucleoside 5'-diphosphate. Functionally, involved in mRNA degradation. Catalyzes the phosphorolysis of single-stranded polyribonucleotides processively in the 3'- to 5'-direction. This Pseudomonas entomophila (strain L48) protein is Polyribonucleotide nucleotidyltransferase.